The following is a 903-amino-acid chain: DNA mismatch repair protein MutS (903 aa).

The tract at residues 1–89 (MPRSASQPPD…DEPAWGHHSQ (89 aa)) is disordered. 2 stretches are compositionally biased toward low complexity: residues 20–36 (APEP…SEPE) and 49–62 (ADAA…QATA). 719–726 (GPNASGKS) is a binding site for ATP.

It belongs to the DNA mismatch repair MutS family.

Its function is as follows. This protein is involved in the repair of mismatches in DNA. It is possible that it carries out the mismatch recognition step. This protein has a weak ATPase activity. The sequence is that of DNA mismatch repair protein MutS from Synechococcus sp. (strain CC9605).